Reading from the N-terminus, the 202-residue chain is Guanylyl cyclase-activating protein 1 (202 aa).

Gly-2 carries N-myristoyl glycine lipidation. Residue Asn-3 is modified to Deamidated asparagine. EF-hand domains are found at residues 31 to 49, 51 to 86, 87 to 122, and 131 to 166; these read SGQLTLYEFRQFFGLKNLS, SASQYVEQMFETFDFNKDGYIDFMEYVAALSLVLKG, KVEQKLRWYFKLYDVDGNGCIDRDELLTIIRAIRTI, and SAEEFTDTVFAKIDINGDGELSLEEFMEGVQKDQML. Residues Asp-64, Asn-66, Asp-68, Tyr-70, Glu-75, Asp-100, Asp-102, Asn-104, Cys-106, Glu-111, Asp-144, Asn-146, Asp-148, Glu-150, and Glu-155 each coordinate Ca(2+).

As to quaternary structure, homodimer. As to expression, in the retina, expressed in rod photoreceptors (at protein level). Expressed in cone photoreceptors.

The protein resides in the membrane. Its subcellular location is the photoreceptor inner segment. It is found in the cell projection. It localises to the cilium. The protein localises to the photoreceptor outer segment. Its function is as follows. Stimulates retinal guanylyl cyclase when free calcium ions concentration is low and inhibits guanylyl cyclase when free calcium ions concentration is elevated. This Ca(2+)-sensitive regulation of retinal guanylyl cyclase is a key event in recovery of the dark state of rod photoreceptors following light exposure. May be involved in cone photoreceptor light response and recovery of response in bright light. This Mus musculus (Mouse) protein is Guanylyl cyclase-activating protein 1 (Guca1a).